A 377-amino-acid polypeptide reads, in one-letter code: D-alanine--D-alanine ligase (377 aa).

Residues 140-349 (KELLTVNGIR…NAKLVDMLID (210 aa)) form the ATP-grasp domain. Residue 170–225 (VAELGNIVFVKAANQGSSVGISRVTNAEEYTEALSDSFQYDYKVLIEEAVNGAREL) participates in ATP binding. The Mg(2+) site is built by aspartate 303, glutamate 316, and asparagine 318.

Belongs to the D-alanine--D-alanine ligase family. Mg(2+) serves as cofactor. Mn(2+) is required as a cofactor.

It localises to the cytoplasm. The catalysed reaction is 2 D-alanine + ATP = D-alanyl-D-alanine + ADP + phosphate + H(+). It participates in cell wall biogenesis; peptidoglycan biosynthesis. Its function is as follows. Cell wall formation. This chain is D-alanine--D-alanine ligase, found in Leuconostoc mesenteroides.